The following is a 362-amino-acid chain: Aspartate-semialdehyde dehydrogenase (362 aa).

Residues Thr15, Gly16, Ala17, Val18, Ser40, Ser43, Leu87, and Asp88 each coordinate NADP(+). The active-site Acyl-thioester intermediate is Cys154. Gly186 contributes to the NADP(+) binding site. Catalysis depends on His251, which acts as the Proton acceptor. Asn340 contacts NADP(+).

The protein belongs to the aspartate-semialdehyde dehydrogenase family. Homotetramer; dimer of dimers.

The protein localises to the cytoplasm. It is found in the cytosol. Its subcellular location is the nucleus. It catalyses the reaction L-aspartate 4-semialdehyde + phosphate + NADP(+) = 4-phospho-L-aspartate + NADPH + H(+). It participates in amino-acid biosynthesis; L-methionine biosynthesis via de novo pathway; L-homoserine from L-aspartate: step 2/3. Its pathway is amino-acid biosynthesis; L-threonine biosynthesis; L-threonine from L-aspartate: step 2/5. Catalyzes the NADPH-dependent formation of L-aspartate 4-semialdehyde (L-ASA) by the reductive dephosphorylation of 4-phospho-L-aspartate. Mediates the second step in the biosynthesis of amino acids that derive from aspartate (the aspartate family of amino acids), including methioinine and threonine, the latter of which is a precursor to isoleucine. The protein is Aspartate-semialdehyde dehydrogenase of Trichophyton rubrum (strain ATCC MYA-4607 / CBS 118892) (Athlete's foot fungus).